The chain runs to 645 residues: Acetyl-coenzyme A synthetase 2 (645 aa).

CoA contacts are provided by residues 190 to 193 (RGGK), threonine 308, and asparagine 332. ATP is bound by residues 384–386 (GEP), 408–413 (DTWWQT), aspartate 497, and arginine 512. Serine 520 is a CoA binding site. Arginine 523 lines the ATP pocket. Mg(2+) is bound by residues valine 534, histidine 536, and valine 539. An N6-acetyllysine modification is found at lysine 606.

This sequence belongs to the ATP-dependent AMP-binding enzyme family. The cofactor is Mg(2+). Acetylated. Deacetylation by the SIR2-homolog deacetylase activates the enzyme.

The catalysed reaction is acetate + ATP + CoA = acetyl-CoA + AMP + diphosphate. Functionally, catalyzes the conversion of acetate into acetyl-CoA (AcCoA), an essential intermediate at the junction of anabolic and catabolic pathways. AcsA undergoes a two-step reaction. In the first half reaction, AcsA combines acetate with ATP to form acetyl-adenylate (AcAMP) intermediate. In the second half reaction, it can then transfer the acetyl group from AcAMP to the sulfhydryl group of CoA, forming the product AcCoA. In Pseudomonas aeruginosa (strain ATCC 15692 / DSM 22644 / CIP 104116 / JCM 14847 / LMG 12228 / 1C / PRS 101 / PAO1), this protein is Acetyl-coenzyme A synthetase 2.